We begin with the raw amino-acid sequence, 257 residues long: Ribosomal RNA small subunit methyltransferase A (257 aa).

Positions 12, 14, 39, 60, 83, and 101 each coordinate S-adenosyl-L-methionine.

This sequence belongs to the class I-like SAM-binding methyltransferase superfamily. rRNA adenine N(6)-methyltransferase family. RsmA subfamily.

Its subcellular location is the cytoplasm. It carries out the reaction adenosine(1518)/adenosine(1519) in 16S rRNA + 4 S-adenosyl-L-methionine = N(6)-dimethyladenosine(1518)/N(6)-dimethyladenosine(1519) in 16S rRNA + 4 S-adenosyl-L-homocysteine + 4 H(+). Functionally, specifically dimethylates two adjacent adenosines (A1518 and A1519) in the loop of a conserved hairpin near the 3'-end of 16S rRNA in the 30S particle. May play a critical role in biogenesis of 30S subunits. The chain is Ribosomal RNA small subunit methyltransferase A from Nitrosomonas europaea (strain ATCC 19718 / CIP 103999 / KCTC 2705 / NBRC 14298).